The following is a 315-amino-acid chain: Fucose-specific lectin (315 aa).

6 repeat units span residues 2–53, 54–103, 104–155, 156–207, 208–260, and 261–315. Positions 2–315 are 6 X approximate tandem repeats; sequence STPGAQQVLF…QLGRSALPPA (314 aa). Alpha-L-fucose is bound by residues arginine 25, glutamate 37, tryptophan 44, arginine 73, glutamate 85, tryptophan 94, glycine 98, arginine 126, glutamate 138, tryptophan 146, threonine 150, arginine 177, glutamine 189, tryptophan 198, arginine 230, and glutamine 242. 3 residues coordinate Zn(2+): cysteine 244, aspartate 246, and histidine 252. 2 residues coordinate alpha-L-fucose: arginine 282 and glutamate 296.

The protein belongs to the fungal fucose-specific lectin family. In terms of assembly, homodimer.

Multispecific lectin that is able to recognize L-fucose in all possible linkages. These could be found not only in decomposed plant matter in soil, which is the natural environment for A.fumigatus, but also in various epitopes on human tissues. Mediates binding of A.fumigatus conidia to airway mucin in a fucose dependent manner. Stimulates IL-8 production by human bronchial cells in a dose-dependent manner, contributing to the inflammatory response observed upon the exposure of a patient to A.fumigatus, and thus might be an important virulence factor involved in an early stage of A.fumigatus infection. This Aspergillus fumigatus (strain ATCC MYA-4609 / CBS 101355 / FGSC A1100 / Af293) (Neosartorya fumigata) protein is Fucose-specific lectin.